We begin with the raw amino-acid sequence, 396 residues long: KiSS-1 receptor (396 aa).

Topologically, residues 1–43 are extracellular; that stretch reads MATEATLAPNVTWWAPSNASGCPGCGVNASDDPGSAPRPLDAW. Residues Asn10, Asn18, and Asn28 are each glycosylated (N-linked (GlcNAc...) asparagine). Residues 44–66 traverse the membrane as a helical segment; it reads LVPLFFATLMLLGLVGNSLVIYV. Residues 67–78 are Cytoplasmic-facing; it reads ICRHKHMQTVTN. Residues 79–101 form a helical membrane-spanning segment; it reads FYIANLAATDVTFLLCCVPFTAL. The Extracellular segment spans residues 102-116; sequence LYPLPAWVLGDFMCK. Cys115 and Cys191 are joined by a disulfide. Residues 117-138 traverse the membrane as a helical segment; it reads FVNYIQQVSVQATCATLTAMSV. Residues 139 to 157 lie on the Cytoplasmic side of the membrane; it reads DRWYVTVFPLRALHRRTPR. Residues 158–180 form a helical membrane-spanning segment; sequence LALAVSLSIWVGSAAVSAPVLAL. At 181-203 the chain is on the extracellular side; sequence HRLSPGPRTYCSEAFPSRALERA. A helical transmembrane segment spans residues 204-224; that stretch reads FALYNLLALYLLPLLATCACY. Topologically, residues 225–260 are cytoplasmic; the sequence is GAMLRHLGRAAVRPAPTDGALQGQLLAQRAGAVRTK. Residues 261–283 form a helical membrane-spanning segment; it reads VSRLVAAVVLLFAACWGPIQLFL. Over 284–305 the chain is Extracellular; sequence VLQALGPSGAWHPRSYAAYAVK. A helical transmembrane segment spans residues 306–330; that stretch reads IWAHCMSYSNSALNPLLYAFLGSHF. Over 331-396 the chain is Cytoplasmic; it reads RQAFCRVCPC…CAQSERTASL (66 aa). The segment at 349 to 396 is disordered; it reads HTSAHSDRAATHTVPHSRAAHPVRIRSPEPGNPVVRSPCAQSERTASL. Residues 387-396 show a composition bias toward polar residues; it reads CAQSERTASL.

The protein belongs to the G-protein coupled receptor 1 family. In terms of tissue distribution, highest level in the heart and 15- and 17-day embryos. Low level in other tissues. Colocalized with gonadotropin-releasing hormone (GnRH) neurons in the hypothalamus.

Its subcellular location is the cell membrane. Its function is as follows. Receptor for metastin (kisspeptin-52 or kp-52), a C-terminally amidated peptide of KiSS1. KiSS1 is a metastasis suppressor protein. Activation of the receptor inhibits cell proliferation and cell migration, key characteristics of tumor metastasis. The receptor is essential for normal gonadotropin-released hormone physiology and for puberty. The hypothalamic KiSS1/KISS1R system is a pivotal factor in central regulation of the gonadotropic axis at puberty and in adulthood. Analysis of the transduction pathways activated by the receptor identifies coupling to phospholipase C and intracellular calcium release through pertussis toxin-insensitive G(q) proteins. The sequence is that of KiSS-1 receptor (Kiss1r) from Mus musculus (Mouse).